Consider the following 298-residue polypeptide: Probable alpha-L-glutamate ligase (298 aa).

The ATP-grasp domain maps to 108–290 (LQLLLKTGVP…IAAEIIDYIE (183 aa)). ATP contacts are provided by residues K144, 181–182 (DF), D190, and 214–216 (RAN). Mg(2+)-binding residues include D251, E263, and N265. 3 residues coordinate Mn(2+): D251, E263, and N265.

This sequence belongs to the RimK family. It depends on Mg(2+) as a cofactor. Mn(2+) is required as a cofactor.

The sequence is that of Probable alpha-L-glutamate ligase from Haemophilus influenzae (strain PittEE).